The following is a 287-amino-acid chain: 4-hydroxybenzoate octaprenyltransferase (287 aa).

7 helical membrane-spanning segments follow: residues 23–40 (IGSLLLLWPTLWALWLAG), 99–119 (LFVVLVLLAFGLVLTLNTMTI), 141–161 (LPQFVLGAAFGWSIPMAYAAV), 163–183 (ESLPATCWMMFLAYICWTVAY), 213–233 (LIIGLLQFSMLALLLILGTMT), 235–255 (LGMPYYISLLVAGGMFIYQQI), and 266–286 (FKAFHNNKYAGMAIFIGVLFG).

It belongs to the UbiA prenyltransferase family. Mg(2+) serves as cofactor.

The protein localises to the cell inner membrane. The enzyme catalyses all-trans-octaprenyl diphosphate + 4-hydroxybenzoate = 4-hydroxy-3-(all-trans-octaprenyl)benzoate + diphosphate. It participates in cofactor biosynthesis; ubiquinone biosynthesis. Its function is as follows. Catalyzes the prenylation of para-hydroxybenzoate (PHB) with an all-trans polyprenyl group. Mediates the second step in the final reaction sequence of ubiquinone-8 (UQ-8) biosynthesis, which is the condensation of the polyisoprenoid side chain with PHB, generating the first membrane-bound Q intermediate 3-octaprenyl-4-hydroxybenzoate. The chain is 4-hydroxybenzoate octaprenyltransferase from Pectobacterium carotovorum subsp. carotovorum (strain PC1).